The chain runs to 467 residues: Probable citrate synthase 1, mitochondrial (467 aa).

Catalysis depends on residues His303, His349, and Asp404.

This sequence belongs to the citrate synthase family. As to quaternary structure, homodimer.

It is found in the mitochondrion matrix. It catalyses the reaction oxaloacetate + acetyl-CoA + H2O = citrate + CoA + H(+). The protein operates within carbohydrate metabolism; tricarboxylic acid cycle; isocitrate from oxaloacetate: step 1/2. The sequence is that of Probable citrate synthase 1, mitochondrial from Aedes aegypti (Yellowfever mosquito).